Consider the following 156-residue polypeptide: Translation initiation factor IF-1, chloroplastic (156 aa).

The tract at residues 1 to 35 is disordered; it reads MAASLTLMTSPPCSRSSKSPSPSPSPSLSCNQQQQ. Residues 1–49 constitute a chloroplast transit peptide; it reads MAASLTLMTSPPCSRSSKSPSPSPSPSLSCNQQQQYKPLLHHQWPPQIS. A compositionally biased stretch (low complexity) spans 10–20; that stretch reads SPPCSRSSKSP. An S1-like domain is found at 72–148; it reads GGSPSVQEQK…TRGRITYRLR (77 aa).

Belongs to the IF-1 family. As to quaternary structure, component of the 30S ribosomal translation pre-initiation complex which assembles on the 30S ribosome in the order IF-2 and IF-3, IF-1 and N-formylmethionyl-tRNA(fMet); mRNA recruitment can occur at any time during PIC assembly.

Its subcellular location is the plastid. It is found in the chloroplast. Its function is as follows. One of the essential components for the initiation of protein synthesis. Stabilizes the binding of IF-2 and IF-3 on the 30S subunit to which N-formylmethionyl-tRNA(fMet) subsequently binds. Helps modulate mRNA selection, yielding the 30S pre-initiation complex (PIC). Upon addition of the 50S ribosomal subunit IF-1, IF-2 and IF-3 are released leaving the mature 70S translation initiation complex. This is Translation initiation factor IF-1, chloroplastic (infA) from Mesembryanthemum crystallinum (Common ice plant).